We begin with the raw amino-acid sequence, 357 residues long: Protein AAR2 homolog (357 aa).

Belongs to the AAR2 family.

The polypeptide is Protein AAR2 homolog (Caenorhabditis elegans).